The primary structure comprises 762 residues: Chondroadherin-like protein (762 aa).

The signal sequence occupies residues 1–30 (MEGPRSSTHVPLVLPLLVLLLLAPARQAAA). In terms of domain architecture, LRRNT 1 spans 31-62 (QRCPQACICDNSRRHVACRYQNLTEVPDAIPE). A glycan (N-linked (GlcNAc...) asparagine) is linked at Asn-52. LRR repeat units follow at residues 87 to 108 (HLTHLDLRHCEVELVAEGAFRG), 111 to 132 (RLLLLNLASNHLRELPQEALDG), 135 to 156 (SLRRLELEGNALEELRPGTFGA), 159 to 180 (ALATLNLAHNALVYLPAMAFQG), 183 to 204 (RVRWLRLSHNALSVLAPEALAG), 207 to 228 (ALRRLSLHHNELQALPGPVLSQ), 231 to 252 (GLARLELGHNPLTYAGEEDGLA), 255 to 276 (GLRELLLDGGALQALGPRAFAH), and 279 to 300 (RLHTLDLRGNQLDTLPPLQGPG). The LRRCT 1 domain maps to 310-359 (NPLWCGCQARPLLEWLARARVRSDGACQGPRRLRGEALDALRPWDLRCPG). Positions 364-390 (EEEELEERAVAGPRAPPRGPPRGPGEE) are disordered. Residues 377 to 386 (RAPPRGPPRG) show a composition bias toward pro residues. In terms of domain architecture, LRRNT 2 spans 387 to 425 (PGEERAVAPCPRACVCVPESRHSSCEGCGLQAVPRGFPS). The cysteines at positions 396 and 411 are disulfide-linked. 10 LRR repeats span residues 426 to 447 (DTQLLDLRRNHFPSVPRAAFPG), 450 to 471 (HLVSLHLQHCGIAELEAGALAG), 474 to 495 (RLIYLYLSDNQLAGLSAAALEG), 498 to 519 (RLGYLYLERNRFLQVPGAALRA), 522 to 543 (SLFSLHLQDNAVDRLAPGDLGR), 546 to 566 (ALRWVYLSGNRITEVSLGALG), 570 to 591 (ELEKLHLDRNQLREVPTGALEG), 594 to 615 (ALLELQLSGNPLRALRDGAFQP), 619 to 640 (SLQHLFLNSSGLEQICPGAFSG), and 644 to 665 (GLQSLHLQKNQLRALPALPSLS). Asn-626 carries N-linked (GlcNAc...) asparagine glycosylation. Positions 675 to 724 (NPFHCDCQLLPLHRWLTGLNLRVGATCATPPNARGQRVKAAAAVFEDCPG) constitute an LRRCT 2 domain. 2 disulfide bridges follow: Cys-679–Cys-722 and Cys-681–Cys-701. Basic residues predominate over residues 728–745 (RKAKRTPASRPSARRTPI). Residues 728-762 (RKAKRTPASRPSARRTPIKGRQCGADKVGKEKGRL) form a disordered region.

This sequence belongs to the small leucine-rich proteoglycan (SLRP) family. SLRP class IV subfamily. In terms of assembly, associates with collagen and binds to collagen fibrils.

It is found in the secreted. Its subcellular location is the extracellular space. The protein localises to the extracellular matrix. In terms of biological role, potential negative modulator of chondrocyte differentiation. Inhibits collagen fibrillogenesis in vitro. May influence chondrocyte's differentiation by acting on its cellular collagenous microenvironment. This chain is Chondroadherin-like protein (CHADL), found in Homo sapiens (Human).